The following is a 269-amino-acid chain: Putative hydro-lyase Aave_3512 (269 aa).

This sequence belongs to the D-glutamate cyclase family.

In Paracidovorax citrulli (strain AAC00-1) (Acidovorax citrulli), this protein is Putative hydro-lyase Aave_3512.